We begin with the raw amino-acid sequence, 128 residues long: Fluoride-specific ion channel FluC (128 aa).

Transmembrane regions (helical) follow at residues 7-27 (AVLLVGAGGFAGASARYLIAV), 34-54 (TGFPMATMLVNVLGCFLIGMI), 70-90 (LLLATGFCGGFTTFSSYMYEI), and 104-124 (LYLIGSLVGGMVFLYLGMALA). Na(+)-binding residues include G78 and T81.

It belongs to the fluoride channel Fluc/FEX (TC 1.A.43) family.

Its subcellular location is the cell inner membrane. The catalysed reaction is fluoride(in) = fluoride(out). With respect to regulation, na(+) is not transported, but it plays an essential structural role and its presence is essential for fluoride channel function. Functionally, fluoride-specific ion channel. Important for reducing fluoride concentration in the cell, thus reducing its toxicity. In Prosthecochloris aestuarii (strain DSM 271 / SK 413), this protein is Fluoride-specific ion channel FluC.